A 213-amino-acid polypeptide reads, in one-letter code: MTMIGVIDYGMGNLYSVSKALERLGCPYIVSGDKEELARVRGLILPGVGSFRDAMHILRETGLADFIRSAVQDGTPLLGICLGMQLLFDESEENGPTEGLGLLRGRVVRFPGVTNDGEPYKVPHMGWNRLRFHRSSPLLDGVEEGHVYFVHSYYVVPGEEEVVLASSEYDVDVPAVVGRDNVFGTQFHPEKSGAVGMSILNRYVGIVTGRENG.

Residues 3 to 213 form the Glutamine amidotransferase type-1 domain; that stretch reads MIGVIDYGMG…VGIVTGRENG (211 aa). C81 serves as the catalytic Nucleophile. Active-site residues include H188 and E190.

In terms of assembly, heterodimer of HisH and HisF.

Its subcellular location is the cytoplasm. The enzyme catalyses 5-[(5-phospho-1-deoxy-D-ribulos-1-ylimino)methylamino]-1-(5-phospho-beta-D-ribosyl)imidazole-4-carboxamide + L-glutamine = D-erythro-1-(imidazol-4-yl)glycerol 3-phosphate + 5-amino-1-(5-phospho-beta-D-ribosyl)imidazole-4-carboxamide + L-glutamate + H(+). It carries out the reaction L-glutamine + H2O = L-glutamate + NH4(+). It functions in the pathway amino-acid biosynthesis; L-histidine biosynthesis; L-histidine from 5-phospho-alpha-D-ribose 1-diphosphate: step 5/9. In terms of biological role, IGPS catalyzes the conversion of PRFAR and glutamine to IGP, AICAR and glutamate. The HisH subunit catalyzes the hydrolysis of glutamine to glutamate and ammonia as part of the synthesis of IGP and AICAR. The resulting ammonia molecule is channeled to the active site of HisF. This Geobacillus thermodenitrificans (strain NG80-2) protein is Imidazole glycerol phosphate synthase subunit HisH.